A 183-amino-acid polypeptide reads, in one-letter code: MDIDPYKEFGATVELLSFLPSDFFPSVRDLLDTASALYREALESPEHCSPHHTALRQAILCWGDLITLSTWVGGNLEDPTSRDLVVSYVNTNMGLKFRQLLWFHISCLTFGRETVIEYLVSFGVWIRTPPAYRPPNAPILSTLPETTVVRRRGRSPRRRTPSPRRRRSQSPRRRRTQSRESQC.

Positions 136-183 are disordered; it reads NAPILSTLPETTVVRRRGRSPRRRTPSPRRRRSQSPRRRRTQSRESQC. Residues 149-176 are compositionally biased toward basic residues; that stretch reads VRRRGRSPRRRTPSPRRRRSQSPRRRRT. 3 positions are modified to phosphoserine; by host: Ser-155, Ser-162, and Ser-170. One copy of the 1; half-length repeat lies at 155 to 161; it reads SPRRRTP. The interval 155–177 is 3 X 8 AA repeats of S-P-R-R-R-[PR]-[ST]-Q; it reads SPRRRTPSPRRRRSQSPRRRRTQ. The Bipartite nuclear localization signal signature appears at 158–175; sequence RRTPSPRRRRSQSPRRRR. Repeat copies occupy residues 162 to 169 and 170 to 177. The segment at 177–183 is RNA binding; that stretch reads QSRESQC.

This sequence belongs to the orthohepadnavirus core antigen family. As to quaternary structure, homodimerizes, then multimerizes. Interacts with cytosol exposed regions of viral L glycoprotein present in the reticulum-to-Golgi compartment. Interacts with human FLNB. Phosphorylated form interacts with host importin alpha; this interaction depends on the exposure of the NLS, which itself depends upon genome maturation and/or phosphorylation of the capsid protein. Interacts with host NUP153. Phosphorylated by host SRPK1, SRPK2, and maybe protein kinase C or GAPDH. Phosphorylation is critical for pregenomic RNA packaging. Protein kinase C phosphorylation is stimulated by HBx protein and may play a role in transport of the viral genome to the nucleus at the late step during the viral replication cycle.

It localises to the virion. The protein localises to the host cytoplasm. Its function is as follows. Self assembles to form an icosahedral capsid. Most capsids appear to be large particles with an icosahedral symmetry of T=4 and consist of 240 copies of capsid protein, though a fraction forms smaller T=3 particles consisting of 180 capsid proteins. Entering capsids are transported along microtubules to the nucleus. Phosphorylation of the capsid is thought to induce exposure of nuclear localization signal in the C-terminal portion of the capsid protein that allows binding to the nuclear pore complex via the importin (karyopherin-) alpha and beta. Capsids are imported in intact form through the nuclear pore into the nuclear basket, where it probably binds NUP153. Only capsids that contain the mature viral genome can release the viral DNA and capsid protein into the nucleoplasm. Immature capsids get stuck in the basket. Capsids encapsulate the pre-genomic RNA and the P protein. Pre-genomic RNA is reverse-transcribed into DNA while the capsid is still in the cytoplasm. The capsid can then either be directed to the nucleus, providing more genomes for transcription, or bud through the endoplasmic reticulum to provide new virions. The chain is Capsid protein from Hepatitis B virus genotype D (isolate France/alpha1/1989) (HBV-D).